Reading from the N-terminus, the 95-residue chain is Secretoglobin family 2A member 1 (95 aa).

An N-terminal signal peptide occupies residues 1 to 18 (MKLVFLFLLVTIPICCYA). Residues Asn-35 and Asn-72 are each glycosylated (N-linked (GlcNAc...) asparagine).

The protein belongs to the secretoglobin family. Lipophilin subfamily. Prostatein is composed of three different peptides called C1, C2 and C3. These form covalent C1:C3 (F) and C2:C3 (S) heterodimers whose non-covalent association forms tetrameric (C1:C3/C3:C2) prostatein molecules. Expressed at very low level in ventral prostate.

It localises to the secreted. Its function is as follows. Part of prostatein which is the major secretory glycoprotein of ventral prostate gland. Steroid-binding protein; can bind non-polar steroids, cholesterol and a group of small proline-rich peptides. This is Secretoglobin family 2A member 1 from Rattus norvegicus (Rat).